A 358-amino-acid polypeptide reads, in one-letter code: Peptide chain release factor 1 (358 aa).

Glutamine 233 carries the post-translational modification N5-methylglutamine.

Belongs to the prokaryotic/mitochondrial release factor family. Post-translationally, methylated by PrmC. Methylation increases the termination efficiency of RF1.

It localises to the cytoplasm. Peptide chain release factor 1 directs the termination of translation in response to the peptide chain termination codons UAG and UAA. This is Peptide chain release factor 1 from Staphylococcus aureus (strain MSSA476).